Reading from the N-terminus, the 914-residue chain is Protein translocase subunit SecA (914 aa).

ATP is bound by residues Gln-87, 105-109 (GEGKT), and Asp-508. Positions 898, 900, 909, and 910 each coordinate Zn(2+).

It belongs to the SecA family. As to quaternary structure, monomer and homodimer. Part of the essential Sec protein translocation apparatus which comprises SecA, SecYEG and auxiliary proteins SecDF-YajC and YidC. Requires Zn(2+) as cofactor.

It is found in the cell inner membrane. The protein resides in the cytoplasm. The enzyme catalyses ATP + H2O + cellular proteinSide 1 = ADP + phosphate + cellular proteinSide 2.. Its function is as follows. Part of the Sec protein translocase complex. Interacts with the SecYEG preprotein conducting channel. Has a central role in coupling the hydrolysis of ATP to the transfer of proteins into and across the cell membrane, serving both as a receptor for the preprotein-SecB complex and as an ATP-driven molecular motor driving the stepwise translocation of polypeptide chains across the membrane. The protein is Protein translocase subunit SecA of Xylella fastidiosa (strain 9a5c).